A 476-amino-acid polypeptide reads, in one-letter code: MQNPHIPSFAQARVLVAGDVMLDRYWHGPTSRISPEAPVPVVRVTELEDRPGGAANVALNMAALGARAELVGVTGRDEAASILEERLAAAEVGCHFQKVDGLPTITKLRVISRQQQLLRLDFEEAFHSQDPAPFAEQVKQQLVHCGALVLSDYAKGALRDCPGLIALAREAGVPVLVDPKGTDFEPYRGATLLTPNLSEFEAVVGVVKDEQDLIAKGQQLIRDLDLQAMLVTRSEKGMTLLRDGLPELHLPARAREVFDVTGAGDTVISVLAVSLAAGAAMEDAVALANIAAGIVVAKLGTAVVSAPELRRAVHQEGGSGRGVMSEAQLLIAIEDARAQGERIVFTNGCFDIIHAGHVGYLDTARRQGDRLVLAVNGDESIRRLKGPGRPINPLERRMAVLAALEAVDWVVAFDTDTPEPLLESIKPDVLVKGGDYSVDQVVGHEFVKSYGGEVKVLDFIDDISTTKIVERIREKD.

The tract at residues 1–320 (MQNPHIPSFA…RAVHQEGGSG (320 aa)) is ribokinase. 196-199 (NLSE) contributes to the ATP binding site. The active site involves D265. The segment at 345 to 476 (FTNGCFDIIH…KIVERIREKD (132 aa)) is cytidylyltransferase.

The protein in the N-terminal section; belongs to the carbohydrate kinase PfkB family. This sequence in the C-terminal section; belongs to the cytidylyltransferase family. As to quaternary structure, homodimer.

It carries out the reaction D-glycero-beta-D-manno-heptose 7-phosphate + ATP = D-glycero-beta-D-manno-heptose 1,7-bisphosphate + ADP + H(+). The enzyme catalyses D-glycero-beta-D-manno-heptose 1-phosphate + ATP + H(+) = ADP-D-glycero-beta-D-manno-heptose + diphosphate. Its pathway is nucleotide-sugar biosynthesis; ADP-L-glycero-beta-D-manno-heptose biosynthesis; ADP-L-glycero-beta-D-manno-heptose from D-glycero-beta-D-manno-heptose 7-phosphate: step 1/4. It functions in the pathway nucleotide-sugar biosynthesis; ADP-L-glycero-beta-D-manno-heptose biosynthesis; ADP-L-glycero-beta-D-manno-heptose from D-glycero-beta-D-manno-heptose 7-phosphate: step 3/4. Functionally, catalyzes the phosphorylation of D-glycero-D-manno-heptose 7-phosphate at the C-1 position to selectively form D-glycero-beta-D-manno-heptose-1,7-bisphosphate. Catalyzes the ADP transfer from ATP to D-glycero-beta-D-manno-heptose 1-phosphate, yielding ADP-D-glycero-beta-D-manno-heptose. The chain is Bifunctional protein HldE from Alcanivorax borkumensis (strain ATCC 700651 / DSM 11573 / NCIMB 13689 / SK2).